We begin with the raw amino-acid sequence, 284 residues long: Large ribosomal subunit protein uL2 (284 aa).

2 disordered regions span residues 28–50 (ELKGSSSRRSVRPNKKLSFFKKS) and 232–284 (RGTA…DRRK). Residues 36–46 (RSVRPNKKLSF) are compositionally biased toward basic residues. A compositionally biased stretch (basic and acidic residues) spans 240–250 (DHPHGGGEGRH). Basic residues predominate over residues 264–284 (KGLKTRDKRKSNKWIVKDRRK).

This sequence belongs to the universal ribosomal protein uL2 family. In terms of assembly, part of the 50S ribosomal subunit. Forms a bridge to the 30S subunit in the 70S ribosome.

Functionally, one of the primary rRNA binding proteins. Required for association of the 30S and 50S subunits to form the 70S ribosome, for tRNA binding and peptide bond formation. It has been suggested to have peptidyltransferase activity; this is somewhat controversial. Makes several contacts with the 16S rRNA in the 70S ribosome. The polypeptide is Large ribosomal subunit protein uL2 (Chlamydia trachomatis serovar L2 (strain ATCC VR-902B / DSM 19102 / 434/Bu)).